Reading from the N-terminus, the 188-residue chain is Peptidyl-tRNA hydrolase (188 aa).

Tyr-14 is a binding site for tRNA. His-19 acts as the Proton acceptor in catalysis. Residues Tyr-64, Asn-66, and Asn-113 each contribute to the tRNA site.

This sequence belongs to the PTH family. As to quaternary structure, monomer.

Its subcellular location is the cytoplasm. The catalysed reaction is an N-acyl-L-alpha-aminoacyl-tRNA + H2O = an N-acyl-L-amino acid + a tRNA + H(+). In terms of biological role, hydrolyzes ribosome-free peptidyl-tRNAs (with 1 or more amino acids incorporated), which drop off the ribosome during protein synthesis, or as a result of ribosome stalling. Its function is as follows. Catalyzes the release of premature peptidyl moieties from peptidyl-tRNA molecules trapped in stalled 50S ribosomal subunits, and thus maintains levels of free tRNAs and 50S ribosomes. This chain is Peptidyl-tRNA hydrolase, found in Chloroflexus aggregans (strain MD-66 / DSM 9485).